Consider the following 350-residue polypeptide: Hydroxymethylglutaryl-CoA synthase (350 aa).

Catalysis depends on glutamate 83, which acts as the Proton donor/acceptor. Residue cysteine 115 is the Acyl-thioester intermediate of the active site. 2 residues coordinate (3S)-3-hydroxy-3-methylglutaryl-CoA: cysteine 115 and threonine 156. Arginine 204 is a binding site for CoA. The (3S)-3-hydroxy-3-methylglutaryl-CoA site is built by threonine 206 and histidine 239. The active-site Proton donor/acceptor is histidine 239. Residue lysine 244 participates in CoA binding. (3S)-3-hydroxy-3-methylglutaryl-CoA contacts are provided by asparagine 271 and serine 301.

It belongs to the thiolase-like superfamily. Archaeal HMG-CoA synthase family. In terms of assembly, interacts with acetoacetyl-CoA thiolase that catalyzes the precedent step in the pathway and with a DUF35 protein. The acetoacetyl-CoA thiolase/HMG-CoA synthase complex channels the intermediate via a fused CoA-binding site, which allows for efficient coupling of the endergonic thiolase reaction with the exergonic HMGCS reaction.

The catalysed reaction is acetoacetyl-CoA + acetyl-CoA + H2O = (3S)-3-hydroxy-3-methylglutaryl-CoA + CoA + H(+). Its pathway is metabolic intermediate biosynthesis; (R)-mevalonate biosynthesis; (R)-mevalonate from acetyl-CoA: step 2/3. Its function is as follows. Catalyzes the condensation of acetyl-CoA with acetoacetyl-CoA to form 3-hydroxy-3-methylglutaryl-CoA (HMG-CoA). Functions in the mevalonate (MVA) pathway leading to isopentenyl diphosphate (IPP), a key precursor for the biosynthesis of isoprenoid compounds that are building blocks of archaeal membrane lipids. The chain is Hydroxymethylglutaryl-CoA synthase from Thermococcus gammatolerans (strain DSM 15229 / JCM 11827 / EJ3).